The following is a 211-amino-acid chain: Ubiquitin-conjugating enzyme E2 S-C (211 aa).

The UBC core domain occupies 11 to 157 (HIIRRVYKEV…AKLMTEIHAQ (147 aa)). Cys95 functions as the Glycyl thioester intermediate in the catalytic mechanism. The disordered stretch occupies residues 158-211 (GSTLRGKDPTDPCSSASATVVSGDGPMAKKHAGDRDKKLAAKKKTDKKRALRRL). The span at 197 to 211 (AAKKKTDKKRALRRL) shows a compositional bias: basic residues.

This sequence belongs to the ubiquitin-conjugating enzyme family.

The catalysed reaction is S-ubiquitinyl-[E1 ubiquitin-activating enzyme]-L-cysteine + [E2 ubiquitin-conjugating enzyme]-L-cysteine = [E1 ubiquitin-activating enzyme]-L-cysteine + S-ubiquitinyl-[E2 ubiquitin-conjugating enzyme]-L-cysteine.. It participates in protein modification; protein ubiquitination. In terms of biological role, catalyzes the covalent attachment of ubiquitin to other proteins. Acts as an essential factor of the anaphase promoting complex/cyclosome (APC/C), a cell cycle-regulated ubiquitin ligase that controls progression through mitosis. Acts by specifically elongating 'Lys-11'-linked polyubiquitin chains initiated by the E2 enzyme ube2c/ubch10 on APC/C substrates, enhancing the degradation of APC/C substrates by the proteasome and promoting mitotic exit. This chain is Ubiquitin-conjugating enzyme E2 S-C (ube2s-c), found in Xenopus laevis (African clawed frog).